A 78-amino-acid polypeptide reads, in one-letter code: Large ribosomal subunit protein eL38 (78 aa).

The protein belongs to the eukaryotic ribosomal protein eL38 family. In terms of assembly, component of the large ribosomal subunit (LSU). Mature yeast ribosomes consist of a small (40S) and a large (60S) subunit. The 40S small subunit contains 1 molecule of ribosomal RNA (18S rRNA) and 33 different proteins (encoded by 57 genes). The large 60S subunit contains 3 rRNA molecules (25S, 5.8S and 5S rRNA) and 46 different proteins (encoded by 81 genes).

Its subcellular location is the cytoplasm. Component of the ribosome, a large ribonucleoprotein complex responsible for the synthesis of proteins in the cell. The small ribosomal subunit (SSU) binds messenger RNAs (mRNAs) and translates the encoded message by selecting cognate aminoacyl-transfer RNA (tRNA) molecules. The large subunit (LSU) contains the ribosomal catalytic site termed the peptidyl transferase center (PTC), which catalyzes the formation of peptide bonds, thereby polymerizing the amino acids delivered by tRNAs into a polypeptide chain. The nascent polypeptides leave the ribosome through a tunnel in the LSU and interact with protein factors that function in enzymatic processing, targeting, and the membrane insertion of nascent chains at the exit of the ribosomal tunnel. The protein is Large ribosomal subunit protein eL38 of Saccharomyces cerevisiae (strain ATCC 204508 / S288c) (Baker's yeast).